Here is a 477-residue protein sequence, read N- to C-terminus: RTX-I toxin determinant D (477 aa).

The Cytoplasmic portion of the chain corresponds to 1 to 59; sequence MKTWLMGLYEFFQAYKTVWTEIWKIRHQLDTPDREKDENEFLPAHLELIETPVSKKPRL. Residues 60–80 traverse the membrane as a helical segment; that stretch reads IAYLIMLFLFLALVISIVSHV. Residues 81-477 lie on the Periplasmic side of the membrane; sequence EIVATATGKL…ESVSESLRER (397 aa).

Belongs to the membrane fusion protein (MFP) (TC 8.A.1) family.

It localises to the cell inner membrane. In terms of biological role, involved in the transport of the toxin RTX-I as well as that of RTX-II. This Actinobacillus pleuropneumoniae (Haemophilus pleuropneumoniae) protein is RTX-I toxin determinant D (apxID).